The chain runs to 173 residues: Thiol-disulfide oxidoreductase ResA (173 aa).

Residues 10–29 (VIILLILCGAVGFTLYQGYF) form a helical; Signal-anchor for type II membrane protein membrane-spanning segment. The 139-residue stretch at 35 to 173 (MEIGKEAPNF…LEEYLKKITP (139 aa)) folds into the Thioredoxin domain. An intrachain disulfide couples Cys-73 to Cys-76.

The protein belongs to the thioredoxin family. ResA subfamily.

It localises to the cell membrane. The protein operates within protein modification; cytochrome c assembly. Thiol-disulfide oxidoreductase which is required in disulfide reduction during c-type cytochrome synthesis. May accept reducing equivalents from CcdA, leading to breakage of disulfide bonds in apocytochrome c; following this reduction heme can be covalently attached. The polypeptide is Thiol-disulfide oxidoreductase ResA (Bacillus thuringiensis subsp. konkukian (strain 97-27)).